The chain runs to 156 residues: UPF0756 membrane protein Exig_2210 (156 aa).

The next 5 membrane-spanning stretches (helical) occupy residues 5–25 (LFLI…LIIA), 52–72 (WGVT…DIGF), 83–103 (IGII…HGVG), 109–129 (PLVT…FRGV), and 131–151 (VGPL…DIIV).

This sequence belongs to the UPF0756 family.

The protein resides in the cell membrane. The chain is UPF0756 membrane protein Exig_2210 from Exiguobacterium sibiricum (strain DSM 17290 / CCUG 55495 / CIP 109462 / JCM 13490 / 255-15).